The primary structure comprises 515 residues: Rop guanine nucleotide exchange factor 12 (515 aa).

The 364-residue stretch at 83–446 (QARERQLLAD…RAGNKRNTPL (364 aa)) folds into the PRONE domain. The residue at position 510 (S510) is a Phosphoserine.

In terms of assembly, interacts (via C-terminus) with PRK2. Interacts with PRK6. As to expression, expressed in pollen grains.

It is found in the cytoplasm. The protein localises to the cell membrane. With respect to regulation, phosphorylation at Ser-510 by PRK2 may release ROPGEF12 auto-inhibition, thereby activating ROPGEF12 and downstream Rop signaling. Functionally, guanine-nucleotide exchange factor (GEF) that acts as an activator of Rop (Rho of plants) GTPases by promoting the exchange of GDP for GTP. May be recruited by PRK2 at the plasma membrane to maintain polar Rop activity in the pollen tube and control polarized pollen tube growth. The chain is Rop guanine nucleotide exchange factor 12 from Arabidopsis thaliana (Mouse-ear cress).